Reading from the N-terminus, the 206-residue chain is MARYLGPKLKLSRREGTDLFLKSGVRAIDSKCKLETAPGQHGARKTRLSEYGVQLREKQKVRRIYGVLEKQFRNYYKDAARTKGNTGENLLTLLETRLDNVVYRMGFGATRAESRQLVSHKSIMVNGSVVNIPSFKVSANDVVSVREKSRTQARIKAALEVSAQREKPTWVEVDNTKMEGAFKRIPERSDLSAEINEQLIVELYSK.

Positions 96–156 (TRLDNVVYRM…EKSRTQARIK (61 aa)) constitute an S4 RNA-binding domain.

It belongs to the universal ribosomal protein uS4 family. In terms of assembly, part of the 30S ribosomal subunit. Contacts protein S5. The interaction surface between S4 and S5 is involved in control of translational fidelity.

One of the primary rRNA binding proteins, it binds directly to 16S rRNA where it nucleates assembly of the body of the 30S subunit. Functionally, with S5 and S12 plays an important role in translational accuracy. In Shewanella halifaxensis (strain HAW-EB4), this protein is Small ribosomal subunit protein uS4.